The primary structure comprises 425 residues: Enolase (425 aa).

A (2R)-2-phosphoglycerate-binding site is contributed by Q162. The Proton donor role is filled by E204. Mg(2+) contacts are provided by D241, E282, and D309. Residues K334, R363, S364, and K385 each contribute to the (2R)-2-phosphoglycerate site. K334 serves as the catalytic Proton acceptor.

This sequence belongs to the enolase family. Mg(2+) is required as a cofactor.

The protein resides in the cytoplasm. The protein localises to the secreted. Its subcellular location is the cell surface. The enzyme catalyses (2R)-2-phosphoglycerate = phosphoenolpyruvate + H2O. Its pathway is carbohydrate degradation; glycolysis; pyruvate from D-glyceraldehyde 3-phosphate: step 4/5. Its function is as follows. Catalyzes the reversible conversion of 2-phosphoglycerate (2-PG) into phosphoenolpyruvate (PEP). It is essential for the degradation of carbohydrates via glycolysis. The chain is Enolase from Corynebacterium glutamicum (strain R).